Consider the following 142-residue polypeptide: D-aminoacyl-tRNA deacylase (142 aa).

The Gly-cisPro motif, important for rejection of L-amino acids signature appears at glycine 133–proline 134.

It belongs to the DTD family. In terms of assembly, homodimer.

It localises to the cytoplasm. It carries out the reaction glycyl-tRNA(Ala) + H2O = tRNA(Ala) + glycine + H(+). The enzyme catalyses a D-aminoacyl-tRNA + H2O = a tRNA + a D-alpha-amino acid + H(+). Functionally, an aminoacyl-tRNA editing enzyme that deacylates mischarged D-aminoacyl-tRNAs. Also deacylates mischarged glycyl-tRNA(Ala), protecting cells against glycine mischarging by AlaRS. Acts via tRNA-based rather than protein-based catalysis; rejects L-amino acids rather than detecting D-amino acids in the active site. By recycling D-aminoacyl-tRNA to D-amino acids and free tRNA molecules, this enzyme counteracts the toxicity associated with the formation of D-aminoacyl-tRNA entities in vivo and helps enforce protein L-homochirality. The protein is D-aminoacyl-tRNA deacylase of Acidothermus cellulolyticus (strain ATCC 43068 / DSM 8971 / 11B).